The chain runs to 333 residues: Foldase protein PrsA (333 aa).

A signal peptide spans 1–22 (MKKSTKLLAGIVTLASAMTLAA). A lipid anchor (N-palmitoyl cysteine) is attached at C23. C23 is lipidated: S-diacylglycerol cysteine. In terms of domain architecture, PpiC spans 145–240 (TPEMTTQVTT…NKFYIVKVTK (96 aa)). A disordered region spans residues 301–333 (DKKASKANTSKSDQKSSSDSSKDSQSSKSKSEK). The segment covering 312–322 (SDQKSSSDSSK) has biased composition (basic and acidic residues). Residues 323–333 (DSQSSKSKSEK) are compositionally biased toward low complexity.

It belongs to the PrsA family.

It is found in the cell membrane. It carries out the reaction [protein]-peptidylproline (omega=180) = [protein]-peptidylproline (omega=0). Its function is as follows. Plays a major role in protein secretion by helping the post-translocational extracellular folding of several secreted proteins. This Streptococcus equi subsp. equi (strain 4047) protein is Foldase protein PrsA.